Consider the following 416-residue polypeptide: Queuine tRNA-ribosyltransferase accessory subunit 2 (416 aa).

Zn(2+) contacts are provided by C350, C352, C355, and H381.

Belongs to the queuine tRNA-ribosyltransferase family. QTRT2 subfamily. Heterodimer of a catalytic subunit qtrt1 and an accessory subunit qtrt2. Zn(2+) serves as cofactor.

Its subcellular location is the cytoplasm. The protein localises to the mitochondrion outer membrane. Its function is as follows. Non-catalytic subunit of the queuine tRNA-ribosyltransferase (TGT) that catalyzes the base-exchange of a guanine (G) residue with queuine (Q) at position 34 (anticodon wobble position) in tRNAs with GU(N) anticodons (tRNA-Asp, -Asn, -His and -Tyr), resulting in the hypermodified nucleoside queuosine (7-(((4,5-cis-dihydroxy-2-cyclopenten-1-yl)amino)methyl)-7-deazaguanosine). This chain is Queuine tRNA-ribosyltransferase accessory subunit 2, found in Danio rerio (Zebrafish).